The primary structure comprises 131 residues: Profilin-3 (131 aa).

It belongs to the profilin family. In terms of assembly, occurs in many kinds of cells as a complex with monomeric actin in a 1:1 ratio.

The protein localises to the cytoplasm. The protein resides in the cytoskeleton. Binds to actin and affects the structure of the cytoskeleton. At high concentrations, profilin prevents the polymerization of actin, whereas it enhances it at low concentrations. By binding to PIP2, it inhibits the formation of IP3 and DG. The protein is Profilin-3 (PRO3) of Triticum aestivum (Wheat).